Reading from the N-terminus, the 89-residue chain is Small ribosomal subunit protein bS20 (89 aa).

2 disordered regions span residues 1-25 (MANI…ASMK) and 69-89 (KNAA…IQAS). A compositionally biased stretch (basic residues) spans 7–20 (AIKRAKTSEKRRAH).

Belongs to the bacterial ribosomal protein bS20 family.

Functionally, binds directly to 16S ribosomal RNA. The protein is Small ribosomal subunit protein bS20 of Geobacillus kaustophilus (strain HTA426).